A 575-amino-acid polypeptide reads, in one-letter code: Transcription factor COE2 (575 aa).

The interval 62 to 65 is interaction with DNA; sequence RKSN. The C5-type zinc finger occupies 150–169; that stretch reads CRVLLTHEVMCSRCCEKKSC. 2 interaction with DNA regions span residues 196–203 and 235–238; these read NCLKTAGN and NNSK. One can recognise an IPT/TIG domain in the interval 253-336; sequence PCIKAISPSE…KGAPGRFIYT (84 aa). Residues 441–453 show a composition bias toward polar residues; the sequence is STQGNNQGYIRNT. A disordered region spans residues 441-479; that stretch reads STQGNNQGYIRNTSSISPRGYSSSSTPQQSNYSTSSNSM. The segment covering 454–479 has biased composition (low complexity); it reads SSISPRGYSSSSTPQQSNYSTSSNSM.

The protein belongs to the COE family. Forms either a homodimer or a heterodimer with a related family member. Interacts with SIX1.

The protein resides in the nucleus. Its function is as follows. Transcription factor that, in osteoblasts, activates the decoy receptor for RANKL, TNFRSF11B, which in turn regulates osteoclast differentiation. Acts in synergy with the Wnt-responsive LEF1/CTNNB1 pathway. Recognizes variations of the palindromic sequence 5'-ATTCCCNNGGGAATT-3'. The chain is Transcription factor COE2 (EBF2) from Homo sapiens (Human).